We begin with the raw amino-acid sequence, 302 residues long: Uricase (302 aa).

At Ser2 the chain carries N-acetylserine. Residues Lys11 and Thr58 each act as charge relay system in the active site. 5-hydroxyisourate-binding residues include Thr58, Asp59, Phe160, Arg177, Val228, Gln229, and Asn255. Residue Thr58 coordinates O2. Residues Thr58, Asp59, Phe160, Arg177, Val228, Gln229, and Asn255 each coordinate urate. Asn255 lines the O2 pocket. His257 serves as the catalytic Charge relay system. The Microbody targeting signal motif lies at Ser300–Leu302.

This sequence belongs to the uricase family. Homotetramer.

The protein resides in the peroxisome. The enzyme catalyses urate + O2 + H2O = 5-hydroxyisourate + H2O2. The protein operates within purine metabolism; urate degradation; (S)-allantoin from urate: step 1/3. With respect to regulation, 8-Azaxanthine is one of the most potent competitive inhibitors of uricase activity. Hypoxanthine has only a small inhibitor effect, and caffeine has no effect at all. Azide not only competes with dioxygen but also competes with the substrate for its enzymatic site. In terms of biological role, urate oxidase is a cofactorless enzyme involved in the metabolism of purines. Catalyzes, in the presence of molecular oxygen, the hydroxylation of uric acid to metastable 5-hydroxyisourate (5-HIU) which is further degraded to allantoin. This chain is Uricase, found in Aspergillus flavus.